The primary structure comprises 170 residues: Cathelicidin antimicrobial peptide (170 aa).

Positions 1-30 are cleaved as a signal peptide; the sequence is MNTQWDSPSLGRWSLVLLLLGLVMPLAIVA. The propeptide at 31-131 is cathelin-like domain (CLD); the sequence is QVLSYQEAVL…DISCDKDKRK (101 aa). Cystine bridges form between Cys-86–Cys-97 and Cys-108–Cys-125. The active core stretch occupies residues 150–162; that stretch reads LKNIGQRIKDFFG.

It belongs to the cathelicidin family. As to quaternary structure, monomer, homodimer or homotrimer (in vitro). Oligomerizes as tetra- or hexamer in solution (in vitro). Proteolytically cleaved by proteinase PRTN3 into antibacterial peptide LL-37. Proteolytically cleaved by cathepsin CTSG and neutrophil elastase ELANE. Post-translationally, resistant to proteolytic degradation in solution, and when bound to both zwitterionic (mimicking mammalian membranes) and negatively charged membranes (mimicking bacterial membranes). In terms of processing, after secretion onto the skin surface, the CAMP gene product is processed by a serine protease-dependent mechanism into multiple novel antimicrobial peptides distinct from and shorter than cathelicidin LL-37. These peptides show enhanced antimicrobial action, acquiring the ability to kill skin pathogens such as S.aureus, E.coli and C.albicans. These peptides have lost the ability to stimulate CXCL8/IL8 release from keratinocytes. The peptides act synergistically, killing bacteria at lower concentrations when present together, and maintain activity at increased salt condition.

The protein resides in the secreted. Its subcellular location is the vesicle. In terms of biological role, antimicrobial protein that is an integral component of the innate immune system. Binds to bacterial lipopolysaccharides (LPS). Acts via neutrophil N-formyl peptide receptors to enhance the release of CXCL2. Postsecretory processing generates multiple cathelicidin antimicrobial peptides with various lengths which act as a topical antimicrobial defense in sweat on skin. The unprocessed precursor form, cathelicidin antimicrobial peptide, inhibits the growth of Gram-negative E.coli and E.aerogenes with efficiencies comparable to that of the mature peptide LL-37 (in vitro). Its function is as follows. Antimicrobial peptide that is an integral component of the innate immune system. Binds to bacterial lipopolysaccharides (LPS). Causes membrane permeabilization by forming transmembrane pores (in vitro). Causes lysis of E.coli. Exhibits antimicrobial activity against Gram-negative bacteria such as P.aeruginosa, S.typhimurium, E.aerogenes, E.coli and P.syringae, Gram-positive bacteria such as L.monocytogenes, S.epidermidis, S.pyogenes and S.aureus, as well as vancomycin-resistant enterococci (in vitro). Exhibits antimicrobial activity against methicillin-resistant S.aureus, P.mirabilis, and C.albicans in low-salt media, but not in media containing 100 mM NaCl (in vitro). Forms chiral supramolecular assemblies with quinolone signal (PQS) molecules of P.aeruginosa, which may lead to interference of bacterial quorum signaling and perturbance of bacterial biofilm formation. May form supramolecular fiber-like assemblies on bacterial membranes. Induces cytokine and chemokine producation as well as TNF/TNFA and CSF2/GMCSF production in normal human keratinocytes. Exhibits hemolytic activity against red blood cells. Exhibits antimicrobial activity against E.coli and B.megaterium (in vitro). The protein is Cathelicidin antimicrobial peptide of Ateles fusciceps (Brown-headed spider monkey).